Consider the following 374-residue polypeptide: GPN-loop GTPase 1 (374 aa).

The residue at position 2 (Ala2) is an N-acetylalanine. Residue 29–34 (GSGKTT) coordinates GTP. The Gly-Pro-Asn (GPN)-loop; involved in dimer interface signature appears at 86-88 (GPN). GTP is bound at residue 189-192 (NKTD). A phosphoserine mark is found at Ser301, Ser312, and Ser314. The segment at 326–354 (RGTLDEEDEEADSDTDDIDHRVTEESHEE) is disordered. Thr328 carries the phosphothreonine modification. A compositionally biased stretch (acidic residues) spans 330–342 (DEEDEEADSDTDD). Position 338 is a phosphoserine (Ser338). Thr340 bears the Phosphothreonine mark. Over residues 343-354 (IDHRVTEESHEE) the composition is skewed to basic and acidic residues.

Belongs to the GPN-loop GTPase family. In terms of assembly, heterodimer with GPN3. Binds to RNA polymerase II (RNAPII). Interacts directly with RNAPII subunits RPB4 and RPB7 and the CTD of RPB1. Interacts with XPA. As to expression, expressed ubiquitously.

The protein resides in the cytoplasm. It localises to the nucleus. Functionally, small GTPase required for proper nuclear import of RNA polymerase II (RNAPII). May act at an RNAP assembly step prior to nuclear import. Forms an interface between the RNA polymerase II enzyme and chaperone/scaffolding proteins, suggesting that it is required to connect RNA polymerase II to regulators of protein complex formation. May be involved in nuclear localization of XPA. This Homo sapiens (Human) protein is GPN-loop GTPase 1.